Here is a 226-residue protein sequence, read N- to C-terminus: Cytidylate kinase (226 aa).

ATP is bound at residue 11 to 19; sequence GPASAGKST.

Belongs to the cytidylate kinase family. Type 1 subfamily.

It localises to the cytoplasm. The enzyme catalyses CMP + ATP = CDP + ADP. The catalysed reaction is dCMP + ATP = dCDP + ADP. This Pediococcus pentosaceus (strain ATCC 25745 / CCUG 21536 / LMG 10740 / 183-1w) protein is Cytidylate kinase.